Consider the following 983-residue polypeptide: Alanine--tRNA ligase, mitochondrial (983 aa).

Residues 1-24 (MTSTTGLRNLTLSFKKQLTTSTRT) constitute a mitochondrion transit peptide. Ser504 carries the phosphoserine modification. His625, His629, Cys744, and His748 together coordinate Zn(2+). The residue at position 975 (Ser975) is a Phosphoserine.

The protein belongs to the class-II aminoacyl-tRNA synthetase family. Monomer. Zn(2+) serves as cofactor.

It is found in the cytoplasm. The protein resides in the mitochondrion. It carries out the reaction tRNA(Ala) + L-alanine + ATP = L-alanyl-tRNA(Ala) + AMP + diphosphate. In terms of biological role, catalyzes the attachment of alanine to tRNA(Ala) in a two-step reaction: alanine is first activated by ATP to form Ala-AMP and then transferred to the acceptor end of tRNA(Ala). Also edits incorrectly charged tRNA(Ala) via its editing domain. In Saccharomyces cerevisiae (strain ATCC 204508 / S288c) (Baker's yeast), this protein is Alanine--tRNA ligase, mitochondrial.